A 376-amino-acid chain; its full sequence is Chaperone protein DnaJ (376 aa).

A J domain is found at 5 to 70 (DFYEVLGVGR…DKKAAYDQFG (66 aa)). The CR-type zinc-finger motif lies at 132–210 (GLSKELRIPT…CHGEGRVEKS (79 aa)). 8 residues coordinate Zn(2+): Cys145, Cys148, Cys162, Cys165, Cys184, Cys187, Cys198, and Cys201. CXXCXGXG motif repeat units follow at residues 145–152 (CEPCDGSG), 162–169 (CGTCHGQG), 184–191 (CPTCHGRG), and 198–205 (CNKCHGEG).

The protein belongs to the DnaJ family. As to quaternary structure, homodimer. Zn(2+) is required as a cofactor.

The protein resides in the cytoplasm. In terms of biological role, participates actively in the response to hyperosmotic and heat shock by preventing the aggregation of stress-denatured proteins and by disaggregating proteins, also in an autonomous, DnaK-independent fashion. Unfolded proteins bind initially to DnaJ; upon interaction with the DnaJ-bound protein, DnaK hydrolyzes its bound ATP, resulting in the formation of a stable complex. GrpE releases ADP from DnaK; ATP binding to DnaK triggers the release of the substrate protein, thus completing the reaction cycle. Several rounds of ATP-dependent interactions between DnaJ, DnaK and GrpE are required for fully efficient folding. Also involved, together with DnaK and GrpE, in the DNA replication of plasmids through activation of initiation proteins. The chain is Chaperone protein DnaJ from Shewanella piezotolerans (strain WP3 / JCM 13877).